A 386-amino-acid chain; its full sequence is Queuine tRNA-ribosyltransferase (386 aa).

Asp102 (proton acceptor) is an active-site residue. Substrate contacts are provided by residues 102 to 106 (DSGGY), Asp156, Gln203, and Gly230. The RNA binding stretch occupies residues 261–267 (GVGKPDD). The Nucleophile role is filled by Asp280. The segment at 285 to 289 (TRSGR) is RNA binding; important for wobble base 34 recognition. Residues Cys318, Cys320, Cys323, and His349 each coordinate Zn(2+).

Belongs to the queuine tRNA-ribosyltransferase family. In terms of assembly, homodimer. Within each dimer, one monomer is responsible for RNA recognition and catalysis, while the other monomer binds to the replacement base PreQ1. Zn(2+) is required as a cofactor.

The enzyme catalyses 7-aminomethyl-7-carbaguanine + guanosine(34) in tRNA = 7-aminomethyl-7-carbaguanosine(34) in tRNA + guanine. Its pathway is tRNA modification; tRNA-queuosine biosynthesis. Catalyzes the base-exchange of a guanine (G) residue with the queuine precursor 7-aminomethyl-7-deazaguanine (PreQ1) at position 34 (anticodon wobble position) in tRNAs with GU(N) anticodons (tRNA-Asp, -Asn, -His and -Tyr). Catalysis occurs through a double-displacement mechanism. The nucleophile active site attacks the C1' of nucleotide 34 to detach the guanine base from the RNA, forming a covalent enzyme-RNA intermediate. The proton acceptor active site deprotonates the incoming PreQ1, allowing a nucleophilic attack on the C1' of the ribose to form the product. After dissociation, two additional enzymatic reactions on the tRNA convert PreQ1 to queuine (Q), resulting in the hypermodified nucleoside queuosine (7-(((4,5-cis-dihydroxy-2-cyclopenten-1-yl)amino)methyl)-7-deazaguanosine). In Zymomonas mobilis subsp. mobilis (strain ATCC 31821 / ZM4 / CP4), this protein is Queuine tRNA-ribosyltransferase.